Reading from the N-terminus, the 399-residue chain is Elongation factor Tu (399 aa).

Residues 10–204 (KPHVNIGTIG…AVDASIPEPE (195 aa)) form the tr-type G domain. Positions 19 to 26 (GHVDHGKT) are G1. A GTP-binding site is contributed by 19–26 (GHVDHGKT). Threonine 26 is a binding site for Mg(2+). Residues 60–64 (GITIN) form a G2 region. Residues 81-84 (DCPG) are G3. Residues 81 to 85 (DCPGH) and 136 to 139 (NKCD) each bind GTP. Residues 136 to 139 (NKCD) are G4. The segment at 174–176 (SGL) is G5.

The protein belongs to the TRAFAC class translation factor GTPase superfamily. Classic translation factor GTPase family. EF-Tu/EF-1A subfamily. Monomer.

It is found in the cytoplasm. It catalyses the reaction GTP + H2O = GDP + phosphate + H(+). Functionally, GTP hydrolase that promotes the GTP-dependent binding of aminoacyl-tRNA to the A-site of ribosomes during protein biosynthesis. The polypeptide is Elongation factor Tu (Prochlorococcus marinus (strain MIT 9312)).